The sequence spans 633 residues: Phosphomethylpyrimidine synthase (633 aa).

Substrate is bound by residues Asn245, Met274, Tyr303, His339, 359–361 (SRG), 400–403 (DGLR), and Glu439. Residue His443 participates in Zn(2+) binding. Tyr466 is a binding site for substrate. Residue His507 coordinates Zn(2+). Residues Cys587, Cys590, and Cys595 each contribute to the [4Fe-4S] cluster site.

The protein belongs to the ThiC family. As to quaternary structure, homodimer. Requires [4Fe-4S] cluster as cofactor.

It carries out the reaction 5-amino-1-(5-phospho-beta-D-ribosyl)imidazole + S-adenosyl-L-methionine = 4-amino-2-methyl-5-(phosphooxymethyl)pyrimidine + CO + 5'-deoxyadenosine + formate + L-methionine + 3 H(+). Its pathway is cofactor biosynthesis; thiamine diphosphate biosynthesis. In terms of biological role, catalyzes the synthesis of the hydroxymethylpyrimidine phosphate (HMP-P) moiety of thiamine from aminoimidazole ribotide (AIR) in a radical S-adenosyl-L-methionine (SAM)-dependent reaction. In Neisseria meningitidis serogroup A / serotype 4A (strain DSM 15465 / Z2491), this protein is Phosphomethylpyrimidine synthase.